Here is a 191-residue protein sequence, read N- to C-terminus: PBAN-type neuropeptides (191 aa).

The signal sequence occupies residues Met-1–Ala-17. The residue at position 44 (Leu-44) is a Leucine amide. A propeptide spanning residues Ser-48–Thr-91 is cleaved from the precursor. Leucine amide is present on residues Leu-100, Leu-120, Leu-156, and Leu-166. Residues Glu-169–Thr-191 constitute a propeptide that is removed on maturation.

Belongs to the pyrokinin family. In terms of tissue distribution, expressed in the subesophageal ganglion.

Its subcellular location is the secreted. Its function is as follows. A hormone that controls sex pheromone production in females and pheromone responsiveness in male. The chain is PBAN-type neuropeptides from Spodoptera littoralis (Egyptian cotton leafworm).